Here is a 211-residue protein sequence, read N- to C-terminus: Uridine kinase (211 aa).

13 to 20 (GASASGKS) contributes to the ATP binding site.

This sequence belongs to the uridine kinase family.

It is found in the cytoplasm. It carries out the reaction uridine + ATP = UMP + ADP + H(+). It catalyses the reaction cytidine + ATP = CMP + ADP + H(+). The protein operates within pyrimidine metabolism; CTP biosynthesis via salvage pathway; CTP from cytidine: step 1/3. It functions in the pathway pyrimidine metabolism; UMP biosynthesis via salvage pathway; UMP from uridine: step 1/1. The chain is Uridine kinase from Shewanella pealeana (strain ATCC 700345 / ANG-SQ1).